Reading from the N-terminus, the 319-residue chain is RWD domain-containing protein 2B (319 aa).

One can recognise an RWD domain in the interval 41–165; the sequence is AELDLLASMF…EWVREHASGY (125 aa). Position 275 is a phosphoserine (Ser-275).

In terms of tissue distribution, ubiquitous.

This chain is RWD domain-containing protein 2B (RWDD2B), found in Homo sapiens (Human).